Consider the following 494-residue polypeptide: DUF21 domain-containing protein At4g14240 (494 aa).

The Extracellular segment spans residues 1–43 (MHLINAVAAARILSGIGQSNGNNGGEAIPFGSFEWITYAGISC). A CNNM transmembrane domain is found at 31–213 (GSFEWITYAG…GKGGELTHDE (183 aa)). Residues 44-64 (FLVLFAGIMSGLTLGLMSLGL) traverse the membrane as a helical segment. Residues 65–93 (VELEILQRSGTPNEKKQAAAIFPVVQKQH) are Cytoplasmic-facing. A helical membrane pass occupies residues 94–114 (QLLVTLLLCNAMAMEGLPIYL). The Extracellular segment spans residues 115 to 121 (DKLFNEY). Residues 122–142 (VAIILSVTFVLAFGEVIPQAI) traverse the membrane as a helical segment. Over 143 to 159 (CTRYGLAVGANFVWLVR) the chain is Cytoplasmic. The helical transmembrane segment at 160 to 180 (ILMTLCYPIAFPIGKILDLVL) threads the bilayer. The Extracellular portion of the chain corresponds to 181 to 494 (GHNDALFRRA…TITEPIRRNN (314 aa)). 3 CBS domains span residues 232–292 (MTPI…TETL), 297–352 (CIRR…SNDS), and 364–425 (GNHD…IVDE). 2 N-linked (GlcNAc...) asparagine glycosylation sites follow: N350 and N385. The interval 459 to 494 (QKGTGGQNKQGQTNKVPGQEQDKMLGTITEPIRRNN) is disordered.

It is found in the membrane. The sequence is that of DUF21 domain-containing protein At4g14240 (CBSDUF1) from Arabidopsis thaliana (Mouse-ear cress).